The primary structure comprises 235 residues: Putative cobalt transport protein CbiM 2 (235 aa).

The next 7 helical transmembrane spans lie at 8–28, 40–60, 74–94, 107–127, 135–155, 160–180, and 185–205; these read LPAI…AYGV, GILP…SLKM, GIGA…IVLI, TLGA…YLIY, LNFY…TYIV, LALA…SSFS, and IFAI…ALLF.

Belongs to the CbiM family. Forms an energy-coupling factor (ECF) transporter complex composed of an ATP-binding protein (A component, CbiO), a transmembrane protein (T component, CbiQ) and 2 possible substrate-capture proteins (S components, CbiM and CbiN) of unknown stoichimetry.

It localises to the cell membrane. It participates in cofactor biosynthesis; adenosylcobalamin biosynthesis. Part of the energy-coupling factor (ECF) transporter complex CbiMNOQ involved in cobalt import. The polypeptide is Putative cobalt transport protein CbiM 2 (Methanosarcina barkeri (strain Fusaro / DSM 804)).